We begin with the raw amino-acid sequence, 815 residues long: Echinoderm microtubule-associated protein-like 1 (815 aa).

Residues serine 31 to glutamine 72 adopt a coiled-coil conformation. The interval asparagine 77–valine 179 is disordered. A compositionally biased stretch (polar residues) spans proline 92–threonine 101. Serine 113 carries the phosphoserine modification. A compositionally biased stretch (polar residues) spans threonine 126–arginine 138. Basic and acidic residues predominate over residues glycine 143–glycine 153. The span at asparagine 156–lysine 168 shows a compositional bias: low complexity. The interval lysine 176–isoleucine 815 is tandem atypical propeller in EMLs. WD repeat units lie at residues glutamate 261–serine 310, threonine 315–tryptophan 358, lysine 363–leucine 400, glutamine 409–lysine 446, arginine 450–glycine 489, lysine 493–threonine 530, phenylalanine 535–alanine 572, valine 578–threonine 613, aspartate 617–valine 655, arginine 664–proline 701, serine 709–tyrosine 768, and alanine 775–valine 814.

The protein belongs to the WD repeat EMAP family. Homotrimer; self-association is mediated by the N-terminal coiled coil. Does not interact with EML3. Binds repolymerizing microtubules. Binds unpolymerized tubulins via its WD repeat region. Interacts with TASOR. In terms of tissue distribution, ubiquitous; expressed in most tissues with the exception of thymus and peripheral blood lymphocytes.

It is found in the cytoplasm. The protein localises to the perinuclear region. Its subcellular location is the cytoskeleton. Its function is as follows. Modulates the assembly and organization of the microtubule cytoskeleton, and probably plays a role in regulating the orientation of the mitotic spindle and the orientation of the plane of cell division. Required for normal proliferation of neuronal progenitor cells in the developing brain and for normal brain development. Does not affect neuron migration per se. In Homo sapiens (Human), this protein is Echinoderm microtubule-associated protein-like 1 (EML1).